Here is a 531-residue protein sequence, read N- to C-terminus: Cytochrome P450 monooxygenase acuC (531 aa).

A helical transmembrane segment spans residues 3-23; that stretch reads PIVWLLGGAIALLVVVIRAAW. Cys-447 contacts heme.

Belongs to the cytochrome P450 family. It depends on heme as a cofactor.

It is found in the endoplasmic reticulum membrane. The catalysed reaction is 3-methylphenol + reduced [NADPH--hemoprotein reductase] + O2 = 3-hydroxybenzyl alcohol + oxidized [NADPH--hemoprotein reductase] + H2O + H(+). The protein operates within secondary metabolite biosynthesis. Cytochrome P450 monooxygenase; part of the gene cluster that mediates the biosynthesis of aculins. The pathway begins with the synthesis of 6-methylsalicylic acid by the polyketide synthase (PKS) acuA via condensation of acetate and malonate units. The 6-methylsalicylic acid decarboxylase acuB then catalyzes the decarboxylation of 6-methylsalicylic acid to yield m-cresol (also known as 3-methylphenol). These first reactions occur in the cytosol. The intermediate m-cresol is then transported into the endoplasmic reticulum where the cytochrome P450 monooxygenase acuC converts it to m-hydroxybenzyl alcohol, which is further converted to gentisyl alcohol by the cytochrome P450 monooxygenase acuD. Gentisyl alcohol is further oxidized by the oxidoreductase acuE that probably catalyzes hydroxylation of the aromatic ring. The aromatic system might then be opened by oxidation through a Baeyer-Villiger type of oxidation, which could be catalyzed by acuF, with the carboxylic acid at C-1 subsequently reduced to an aldehyde by acuG. Subsequently, a hemiacetal is formed, before the dehydrogenase acuH would reduce the double bond between C-4 and C-6. Finally, keto-enol tautomerism results in formation of aculinic acid, which exists as two diastereomers (both R/S configurations at C-1) by non-enzymatic hemiacetal formation. The carboxypeptidase acuI could be involved in the linking of aculinic acid to an aculene A moiety produced by the aculene biosynthesis cluster and which leads to the production of aculin A. AcuI may also be involved in the attachment of proline to aculinic acid to form epi-aculins A and B. The polypeptide is Cytochrome P450 monooxygenase acuC (Aspergillus aculeatus (strain ATCC 16872 / CBS 172.66 / WB 5094)).